Consider the following 454-residue polypeptide: tRNA modification GTPase MnmE (454 aa).

(6S)-5-formyl-5,6,7,8-tetrahydrofolate contacts are provided by arginine 23, glutamate 80, and lysine 120. The region spanning 216–377 (GMKVVIAGRP…LRNHLKQSMG (162 aa)) is the TrmE-type G domain. Asparagine 226 contributes to the K(+) binding site. GTP contacts are provided by residues 226–231 (NAGKSS), 245–251 (TDIAGTT), 270–273 (DTAG), 335–338 (NKAD), and 358–360 (SAR). Serine 230 contributes to the Mg(2+) binding site. Positions 245, 247, and 250 each coordinate K(+). Residue threonine 251 participates in Mg(2+) binding. Lysine 454 lines the (6S)-5-formyl-5,6,7,8-tetrahydrofolate pocket.

This sequence belongs to the TRAFAC class TrmE-Era-EngA-EngB-Septin-like GTPase superfamily. TrmE GTPase family. Homodimer. Heterotetramer of two MnmE and two MnmG subunits. Requires K(+) as cofactor.

Its subcellular location is the cytoplasm. Exhibits a very high intrinsic GTPase hydrolysis rate. Involved in the addition of a carboxymethylaminomethyl (cmnm) group at the wobble position (U34) of certain tRNAs, forming tRNA-cmnm(5)s(2)U34. This is tRNA modification GTPase MnmE from Escherichia coli O6:K15:H31 (strain 536 / UPEC).